The chain runs to 206 residues: MDADSKRFLATLRSRSEMLMGFEEIDGDDDFQEEFACPFCAESYDIIGLCCHIDDEHTLESKNAVCPVCSLKVGVDIVAHITLHHGSLFKLQRKRKSRKSGTNSTLSLLRKELREGDLQRLLGFTSRNGSVASSVTPDPLLSSFISPTRSQSSPAPRQTKNVSEDKQIERKRQVFISPVSLKDREERRHKSEFVQRLLSSAIFDEV.

Residue Thr105 is modified to Phosphothreonine. Ser107 carries the phosphoserine modification. A disordered region spans residues 142 to 167 (SSFISPTRSQSSPAPRQTKNVSEDKQ). Residues 143 to 161 (SFISPTRSQSSPAPRQTKN) are compositionally biased toward polar residues.

It belongs to the Di19 family. Interacts with ADO2/LKP2, CPK11 and CPK4. Weak interaction with CPK12 and no interactions with CPK1, CPK5 or CPK26. In terms of processing, phosphorylated within the NLS/NES region. In terms of tissue distribution, expressed in seedlings, roots, leaves, stems, flowers and siliques.

The protein resides in the nucleus. This Arabidopsis thaliana (Mouse-ear cress) protein is Protein DEHYDRATION-INDUCED 19 (DI19-1).